A 260-amino-acid chain; its full sequence is MQRNGLIGDTIRSLGFLSRLPLPQGWFDNTDDSLPRNARAFPLAGGILGLLAGVALLIANAISLPPLAAALIAIGALAAMTGALHEDGLGDTADGFFGASTPDRRLDIMKDSRIGTFAALTLVIWTGVKASLLMAIIARAGAGYALLALIGTEAASRAGMLAFWHALPSARPGGLADSMGQPQWETVVCGCGLGLALLAIGFLPSGGMVALINALVLMTVVLFGFARLCMAKIGGRTGDTLGAAQQIGSLAALIGLVMAL.

7 consecutive transmembrane segments (helical) span residues 42–62, 64–84, 117–137, 144–164, 192–212, 214–234, and 240–260; these read PLAG…ANAI, LPPL…TGAL, FAAL…MAII, YALL…LAFW, GLGL…VALI, ALVL…AKIG, and TLGA…VMAL.

The protein belongs to the CobS family. It depends on Mg(2+) as a cofactor.

The protein localises to the cell inner membrane. The catalysed reaction is alpha-ribazole + adenosylcob(III)inamide-GDP = adenosylcob(III)alamin + GMP + H(+). It catalyses the reaction alpha-ribazole 5'-phosphate + adenosylcob(III)inamide-GDP = adenosylcob(III)alamin 5'-phosphate + GMP + H(+). It functions in the pathway cofactor biosynthesis; adenosylcobalamin biosynthesis; adenosylcobalamin from cob(II)yrinate a,c-diamide: step 7/7. Functionally, joins adenosylcobinamide-GDP and alpha-ribazole to generate adenosylcobalamin (Ado-cobalamin). Also synthesizes adenosylcobalamin 5'-phosphate from adenosylcobinamide-GDP and alpha-ribazole 5'-phosphate. The protein is Adenosylcobinamide-GDP ribazoletransferase of Brucella melitensis biotype 1 (strain ATCC 23456 / CCUG 17765 / NCTC 10094 / 16M).